The following is a 347-amino-acid chain: Olfactory receptor 1L6 (347 aa).

Over 1–62 (MSYFYRLKLM…GLSSNPQLQK (62 aa)) the chain is Extracellular. N41 carries an N-linked (GlcNAc...) asparagine glycan. The helical transmembrane segment at 63 to 86 (PLFAIFLIMYLLAAVGNVLIIPAI) threads the bilayer. Over 87 to 94 (YSDPRLHT) the chain is Cytoplasmic. A helical transmembrane segment spans residues 95-116 (PMYFFLSNLSFMDICFTTVIVP). At 117 to 137 (KMLVNFLSETKVISYVGCLAQ) the chain is on the extracellular side. The cysteines at positions 134 and 226 are disulfide-linked. The chain crosses the membrane as a helical span at residues 138–157 (MYFFMAFGNTDSYLLASMAI). Residues 158-176 (DRLVAICNPLHYDVVMKPR) are Cytoplasmic-facing. A helical transmembrane segment spans residues 177–195 (HCLLMLLGSCSISHLHSLF). The Extracellular segment spans residues 196-233 (RVLLMSRLSFCASHIIKHFFCDTQPVLKLSCSDTSSSQ). The helical transmembrane segment at 234-256 (MVVMTETLAVIVTPFLCIIFSYL) threads the bilayer. The Cytoplasmic segment spans residues 257–273 (RIMVTVLRIPSAAGKWK). A helical transmembrane segment spans residues 274–296 (AFSTCGSHLTAVALFYGSIIYVY). The Extracellular segment spans residues 297 to 309 (FRPLSMYSVVRDR). Residues 310-329 (VATVMYTVVTPMLNPFIYSL) form a helical membrane-spanning segment. At 330–347 (RNKDMKRGLKKLQDRIYR) the chain is on the cytoplasmic side.

This sequence belongs to the G-protein coupled receptor 1 family.

The protein localises to the cell membrane. Functionally, odorant receptor. This chain is Olfactory receptor 1L6 (OR1L6), found in Homo sapiens (Human).